The primary structure comprises 275 residues: Large ribosomal subunit protein uL2 (275 aa).

Disordered regions lie at residues 1 to 24 (MGIR…FSEI) and 208 to 275 (AGRT…RRRR). The span at 12-22 (GTRQATVSDFS) shows a compositional bias: polar residues. 2 stretches are compositionally biased toward basic residues: residues 208–219 (AGRTRHLGRRPQ) and 255–275 (LGKK…RRRR).

The protein belongs to the universal ribosomal protein uL2 family. In terms of assembly, part of the 50S ribosomal subunit. Forms a bridge to the 30S subunit in the 70S ribosome.

One of the primary rRNA binding proteins. Required for association of the 30S and 50S subunits to form the 70S ribosome, for tRNA binding and peptide bond formation. It has been suggested to have peptidyltransferase activity; this is somewhat controversial. Makes several contacts with the 16S rRNA in the 70S ribosome. This chain is Large ribosomal subunit protein uL2, found in Picosynechococcus sp. (strain ATCC 27264 / PCC 7002 / PR-6) (Agmenellum quadruplicatum).